A 306-amino-acid chain; its full sequence is MSCRELVILGCSSQQPTRTRNQGAYLFRWNNEGLLFDPGEGTQRQFIFANIAPTIVSRIFISHFHGDHCLGLGSMLMRLNLDKVTHPIHCYYPASGKKYFDRLRYGTIYHETIRVIEHPIDKEGIVEDFGNFRIEARKLNHLVDTLGWRITEPDTIKFIPEKIKAAGLRGPIMQDLLRNEHVTVNGKTLYLKDLSYIRKGDSIAVIADTLPCPSIVDLAKNARIMLCESTYLEEHSHLAESHYHMTAKQAATQALAAGAQQLVLTHFSARYLNSKEFEIEAGKIFPNVTAAEEFRSYPFPKNPSSK.

His-63, His-65, Asp-67, His-68, His-141, Asp-208, and His-266 together coordinate Zn(2+). Catalysis depends on Asp-67, which acts as the Proton acceptor.

The protein belongs to the RNase Z family. Homodimer. Zn(2+) is required as a cofactor.

The enzyme catalyses Endonucleolytic cleavage of RNA, removing extra 3' nucleotides from tRNA precursor, generating 3' termini of tRNAs. A 3'-hydroxy group is left at the tRNA terminus and a 5'-phosphoryl group is left at the trailer molecule.. Functionally, zinc phosphodiesterase, which displays some tRNA 3'-processing endonuclease activity. Probably involved in tRNA maturation, by removing a 3'-trailer from precursor tRNA. This is Ribonuclease Z from Chlamydia abortus (strain DSM 27085 / S26/3) (Chlamydophila abortus).